Here is a 367-residue protein sequence, read N- to C-terminus: Methylthioribose-1-phosphate isomerase (367 aa).

Asp250 (proton donor) is an active-site residue.

It belongs to the eIF-2B alpha/beta/delta subunits family. MtnA subfamily.

Its subcellular location is the cytoplasm. The protein resides in the nucleus. It catalyses the reaction 5-(methylsulfanyl)-alpha-D-ribose 1-phosphate = 5-(methylsulfanyl)-D-ribulose 1-phosphate. It participates in amino-acid biosynthesis; L-methionine biosynthesis via salvage pathway; L-methionine from S-methyl-5-thio-alpha-D-ribose 1-phosphate: step 1/6. Catalyzes the interconversion of methylthioribose-1-phosphate (MTR-1-P) into methylthioribulose-1-phosphate (MTRu-1-P). This is Methylthioribose-1-phosphate isomerase (IDI2) from Hordeum vulgare (Barley).